The sequence spans 235 residues: Calcium-activated potassium channel subunit beta-2 (235 aa).

The segment at 1–45 is ball and chain; the sequence is MFIWTSGRTSSSYRHDEKRNIYQKIRDHDLLDKRKTVTALKAGED. Topologically, residues 1-46 are cytoplasmic; sequence MFIWTSGRTSSSYRHDEKRNIYQKIRDHDLLDKRKTVTALKAGEDR. The helical transmembrane segment at 47 to 67 threads the bilayer; that stretch reads AILLGLAMMVCSIMMYFLLGI. The Extracellular segment spans residues 68–194; sequence TLLRSYMQSV…VILTKLYSSN (127 aa). 3 N-linked (GlcNAc...) asparagine glycosylation sites follow: Asn88, Asn96, and Asn119. A helical transmembrane segment spans residues 195–215; it reads VLFHSLFWPTCMMAGGVAIVA. The Cytoplasmic segment spans residues 216–235; that stretch reads MVKLTQYLSLLCERIQRINR.

It belongs to the KCNMB (TC 8.A.14.1) family. KCNMB2 subfamily. In terms of assembly, interacts with KCNMA1 tetramer. There are probably 4 molecules of KCMNB2 per KCNMA1 tetramer. N-glycosylated. Highly expressed in brain and heart. Also expressed in lung.

Its subcellular location is the membrane. Regulatory subunit of the calcium activated potassium KCNMA1 (maxiK) channel. Modulates the calcium sensitivity and gating kinetics of KCNMA1, thereby contributing to KCNMA1 channel diversity. Acts as a negative regulator that confers rapid and complete inactivation of KCNMA1 channel complex. In Rattus norvegicus (Rat), this protein is Calcium-activated potassium channel subunit beta-2 (Kcnmb2).